A 72-amino-acid polypeptide reads, in one-letter code: Conotoxin LiC53 (72 aa).

Positions 1–23 (MEKLTSLLLVAALLMLTQTLIQG) are cleaved as a signal peptide. A propeptide spanning residues 24–41 (GGEDRPNKKFLQKIKSTA) is cleaved from the precursor. 3 cysteine pairs are disulfide-bonded: Cys-45–Cys-59, Cys-52–Cys-63, and Cys-58–Cys-68.

The protein belongs to the conotoxin O2 superfamily. Expressed by the venom duct.

It localises to the secreted. The protein is Conotoxin LiC53 of Conus lividus (Livid cone).